We begin with the raw amino-acid sequence, 293 residues long: UDP-N-acetylglucosamine transferase subunit ALG13 (293 aa).

Belongs to the glycosyltransferase 28 family. Heterodimer with ALG14 to form a functional enzyme.

Its subcellular location is the endoplasmic reticulum. The catalysed reaction is an N-acetyl-alpha-D-glucosaminyl-diphospho-di-trans,poly-cis-dolichol + UDP-N-acetyl-alpha-D-glucosamine = an N,N'-diacetylchitobiosyl-diphospho-di-trans,poly-cis-dolichol + UDP + H(+). In terms of biological role, involved in protein N-glycosylation. Essential for the second step of the dolichol-linked oligosaccharide pathway. This chain is UDP-N-acetylglucosamine transferase subunit ALG13 (ALG13), found in Candida albicans (strain SC5314 / ATCC MYA-2876) (Yeast).